The sequence spans 413 residues: L-cysteine:1D-myo-inositol 2-amino-2-deoxy-alpha-D-glucopyranoside ligase (413 aa).

A disordered region spans residues M1 to L21. C43 contributes to the Zn(2+) binding site. L-cysteinyl-5'-AMP contacts are provided by residues C43–T46, T58, and N81–T83. Positions I45–H55 match the 'HIGH' region motif. A 'ERGGDP' region motif is present at residues E187–P192. W227 contacts L-cysteinyl-5'-AMP. Residue C231 participates in Zn(2+) binding. Residue G249–D251 participates in L-cysteinyl-5'-AMP binding. H256 is a binding site for Zn(2+). I283 serves as a coordination point for L-cysteinyl-5'-AMP. Positions K289–S293 match the 'KMSKS' region motif.

The protein belongs to the class-I aminoacyl-tRNA synthetase family. MshC subfamily. Monomer. The cofactor is Zn(2+).

It catalyses the reaction 1D-myo-inositol 2-amino-2-deoxy-alpha-D-glucopyranoside + L-cysteine + ATP = 1D-myo-inositol 2-(L-cysteinylamino)-2-deoxy-alpha-D-glucopyranoside + AMP + diphosphate + H(+). Functionally, catalyzes the ATP-dependent condensation of GlcN-Ins and L-cysteine to form L-Cys-GlcN-Ins. This Rhodococcus erythropolis (strain PR4 / NBRC 100887) protein is L-cysteine:1D-myo-inositol 2-amino-2-deoxy-alpha-D-glucopyranoside ligase.